The primary structure comprises 493 residues: MEPSQRNTKPPSFSDSTIPVDSDGRATVFRPFSLSSPHSRAFHLAWLSLFSCFFSTFSIPPLVPVISSDLNLSASTVSAAGIASFAGSIFSRLAMGPLCDLIGPRTSSAILSFLTAPVILSASLVSSPTSFILVRFFVGFSLANFVANQYWMSSMFSGNVIGLANGVSAGWANVGAGISQLLMPLIYSTIAEFLPRAVAWRVSFVFPAIFQVTTAVLVLLYGQDTPHGNRKNSNQNKLTIPEEEEVLVVEEDERSSFVEILIGGLGNYRAWILALLYGYSYGVELTTDNVIAGYFYERFGVNLEAAGTIAASFGISNIASRPAGGMISDALGKRFGMRGRLWGLWIVQSVAGLLCVLLGRVNSLWGSILVMWVFSVFVQAASGLVFGVVPFVSTRSLGVVAGITGSGGTVGAVVTQFLLFSGDDVRKQRSISLMGLMTFVFALSVTSIYFPQWGGMCCGPSSSSEEEDISRGLLVEDEDEEGKVVSGSLRPVC.

Residues 1-19 (MEPSQRNTKPPSFSDSTIP) show a composition bias toward polar residues. A disordered region spans residues 1–20 (MEPSQRNTKPPSFSDSTIPV). A run of 12 helical transmembrane segments spans residues 46–66 (WLSL…VPVI), 70–90 (LNLS…GSIF), 113–133 (FLTA…SFIL), 136–156 (FFVG…SSMF), 174–194 (VGAG…AEFL), 202–222 (VSFV…LLYG), 257–277 (FVEI…ALLY), 299–319 (FGVN…SNIA), 341–361 (LWGL…LGRV), 368–388 (ILVM…VFGV), 400–420 (VAGI…FLLF), and 431–451 (ISLM…IYFP).

The protein belongs to the major facilitator superfamily. Nitrate/nitrite porter (TC 2.A.1.8) family. Expressed in seeds, leaves and shoots. Lower expression in roots.

It localises to the vacuole membrane. Its function is as follows. Involved in high-affinity nitrate transport. Controls nitrate content in seeds. In Arabidopsis thaliana (Mouse-ear cress), this protein is High affinity nitrate transporter 2.7 (NRT2.7).